Reading from the N-terminus, the 184-residue chain is Ribosome-recycling factor (184 aa).

Belongs to the RRF family.

It is found in the cytoplasm. In terms of biological role, responsible for the release of ribosomes from messenger RNA at the termination of protein biosynthesis. May increase the efficiency of translation by recycling ribosomes from one round of translation to another. The sequence is that of Ribosome-recycling factor from Onion yellows phytoplasma (strain OY-M).